A 134-amino-acid chain; its full sequence is C-C motif chemokine 21 (134 aa).

An N-terminal signal peptide occupies residues 1–23 (MAQSLALSLLILVLAFGIPRTQG). 3 disulfides stabilise this stretch: Cys-31–Cys-57, Cys-32–Cys-75, and Cys-103–Cys-122. Residues 88-134 (QHLDKTPSPQKPAQGCRKDRGASKTGKKGKGSKGCKRTERSQTPKGP) are disordered. Residues 98–134 (KPAQGCRKDRGASKTGKKGKGSKGCKRTERSQTPKGP) form a C-terminal basic extension region. Basic residues predominate over residues 112–122 (TGKKGKGSKGC). The span at 123–134 (KRTERSQTPKGP) shows a compositional bias: basic and acidic residues.

The protein belongs to the intercrine beta (chemokine CC) family. Monomer. Binds to CCR7. Interacts with PDPN; relocalizes PDPN to the basolateral membrane. Interacts with TNFAIP6 (via Link domain). Interacts with GPR174. As to expression, highly expressed in high endothelial venules of lymph nodes, spleen and appendix. Intermediate levels found in small intestine, thyroid gland and trachea. Low level expression in thymus, bone marrow, liver, and pancreas. Also found in tonsil, fetal heart and fetal spleen.

The protein resides in the secreted. Its function is as follows. Inhibits hemopoiesis and stimulates chemotaxis. Chemotactic in vitro for thymocytes and activated T-cells, but not for B-cells, macrophages, or neutrophils. Shows preferential activity towards naive T-cells. May play a role in mediating homing of lymphocytes to secondary lymphoid organs. Binds to atypical chemokine receptor ACKR4 and mediates the recruitment of beta-arrestin (ARRB1/2) to ACKR4. The polypeptide is C-C motif chemokine 21 (CCL21) (Homo sapiens (Human)).